Consider the following 203-residue polypeptide: E3 ubiquitin-protein ligase rnf152-A (203 aa).

An RING-type; degenerate zinc finger spans residues 12-55 (CQICFNYYSPRRRPKLLDCKRTCCSVCLQQMRACQKDLRCPWCR). A helical membrane pass occupies residues 167–187 (SGICTVILVACVLVFLLGIVL).

The protein belongs to the RNF152 family.

It is found in the lysosome membrane. It carries out the reaction S-ubiquitinyl-[E2 ubiquitin-conjugating enzyme]-L-cysteine + [acceptor protein]-L-lysine = [E2 ubiquitin-conjugating enzyme]-L-cysteine + N(6)-ubiquitinyl-[acceptor protein]-L-lysine.. The protein operates within protein modification; protein ubiquitination. In terms of biological role, E3 ubiquitin-protein ligase that acts as a negative regulator of mTORC1 signaling by mediating ubiquitination of RagA/RRAGA and RHEB. Catalyzes 'Lys-63'-linked polyubiquitination of RagA/RRAGA in response to amino acid starvation, thereby regulating mTORC1 signaling. Also mediates monoubiquitination of RHEB, promoting its association with the TSC-TBC complex and subsequent inhibition. Also mediates 'Lys-48'-linked polyubiquitination of target proteins and their subsequent targeting to the proteasome for degradation. The polypeptide is E3 ubiquitin-protein ligase rnf152-A (Xenopus laevis (African clawed frog)).